Consider the following 726-residue polypeptide: BRCA1-A complex subunit RAP80 (726 aa).

The interval 1–27 is disordered; that stretch reads MPRRKKKIKEASEGQNLEKKDLETTSS. A necessary for transcriptional repression region spans residues 1 to 101; the sequence is MPRRKKKIKE…SEQEAKEVNN (101 aa). The segment covering 9-23 has biased composition (basic and acidic residues); the sequence is KEASEGQNLEKKDLE. K20 participates in a covalent cross-link: Glycyl lysine isopeptide (Lys-Gly) (interchain with G-Cter in SUMO2). S29 is modified (phosphoserine). Residue K31 forms a Glycyl lysine isopeptide (Lys-Gly) (interchain with G-Cter in SUMO2) linkage. Phosphoserine is present on residues S44 and S46. A disordered region spans residues 47–67; that stretch reads DGEETKEENGLQKMKTKQSNR. Residue T51 is modified to Phosphothreonine. Positions 60–78 match the LR motif motif; it reads MKTKQSNRSKCLAKRKIAQ. Residues K75 and K90 each participate in a glycyl lysine isopeptide (Lys-Gly) (interchain with G-Cter in SUMO2) cross-link. UIM domains follow at residues 80 to 99 and 104 to 124; these read SEEEQFALALKMSEQEAKEV and EKEEELLRKAIAESLNSRWSS. Disordered stretches follow at residues 93–112 and 119–208; these read EQEAKEVNNQEEKEEELLRK and NSRW…SRPV. Residues 97 to 103 are UIM-linker; sequence KEVNNQE. The tract at residues 100–200 is necessary for interaction with NR6A1 N-terminus; that stretch reads NNQEEKEEEL…EEPLSGSSGS (101 aa). S140 carries the post-translational modification Phosphoserine. The segment covering 177–188 has biased composition (basic and acidic residues); the sequence is EEGKEPWDHSEN. Over residues 194–205 the composition is skewed to low complexity; that stretch reads LSGSSGSQDQSS. Phosphoserine is present on S205. K245 participates in a covalent cross-link: Glycyl lysine isopeptide (Lys-Gly) (interchain with G-Cter in SUMO2). Residues 270–400 are AIR; it reads IGGTVHYYWG…EEEPTTGRGQ (131 aa). The interval 356–411 is disordered; it reads GAREERQGSGASVWHSETKDSQKSPITSLKQRLLLEEEPTTGRGQSSQGLFVEETS. Phosphoserine is present on residues S379, S402, and S427. Positions 400-507 are necessary for interaction with NR6A1 C-terminus; sequence QSSQGLFVEE…DSRPPAVSAS (108 aa). K436 participates in a covalent cross-link: Glycyl lysine isopeptide (Lys-Gly) (interchain with G-Cter in SUMO2). Residues 509-536 form a UBZ4-type zinc finger; that stretch reads RVSCPLCNQDFPPTKIEQHAMYCTGLME. Zn(2+)-binding residues include C512, C515, H527, and C531. The tract at residues 512–589 is zinc-finger-like region; the sequence is CPLCNQDFPP…GEYQCHVETC (78 aa). Residues K551, K569, and K616 each participate in a glycyl lysine isopeptide (Lys-Gly) (interchain with G-Cter in SUMO2) cross-link. The segment at 611-675 is disordered; it reads APVEGKPKQR…DVEEAGCSRE (65 aa). S636 carries the post-translational modification Phosphoserine. A compositionally biased stretch (basic and acidic residues) spans 640-653; that stretch reads QSEHRTTGVERTPK. A phosphoserine mark is found at S664 and S688. K707 participates in a covalent cross-link: Glycyl lysine isopeptide (Lys-Gly) (interchain with G-Cter in SUMO2).

It belongs to the RAP80 family. As to quaternary structure, component of the ARISC complex, at least composed of UIMC1/RAP80, ABRAXAS1, BRCC3/BRCC36, BABAM2 and BABAM1/NBA1. Component of the BRCA1-A complex, at least composed of the BRCA1, BARD1, UIMC1/RAP80, ABRAXAS1, BRCC3/BRCC36, BABAM2 and BABAM1/NBA1. In the BRCA1-A complex, interacts directly with ABRAXAS1. Interacts with UBE2I. Interacts with NR6A1. Interacts with ESR1. Interacts with TSP57. Interacts with TRAIP. In terms of processing, sumoylated. Post-translationally, phosphorylated upon DNA damage by ATM or ATR.

Its subcellular location is the nucleus. Functionally, ubiquitin-binding protein. Specifically recognizes and binds 'Lys-63'-linked ubiquitin. Plays a central role in the BRCA1-A complex by specifically binding 'Lys-63'-linked ubiquitinated histones H2A and H2AX at DNA lesions sites, leading to target the BRCA1-BARD1 heterodimer to sites of DNA damage at double-strand breaks (DSBs). The BRCA1-A complex also possesses deubiquitinase activity that specifically removes 'Lys-63'-linked ubiquitin on histones H2A and H2AX. Also weakly binds monoubiquitin but with much less affinity than 'Lys-63'-linked ubiquitin. May interact with monoubiquitinated histones H2A and H2B; the relevance of such results is however unclear in vivo. Does not bind Lys-48'-linked ubiquitin. May indirectly act as a transcriptional repressor by inhibiting the interaction of NR6A1 with the corepressor NCOR1. The polypeptide is BRCA1-A complex subunit RAP80 (Uimc1) (Rattus norvegicus (Rat)).